A 238-amino-acid chain; its full sequence is MESTSNPTVSFLGIDFDLTILAMSLLTITIIFILVFWASRKMTIKPKGKQNVLEYVYELVNNTISQNLGHYTKNYSLLMFILFSFVFIANNLGLMTSLKTHEHNFWTSPTANFGVDITLSLLVAFICHIEGIRKKGIGGYLKGFLSPTPAMLPMNLLEEVTNVASLALRLFGNIFSGEVVTGLLLQLAVLSPFTGPLAFALNIVWTAFSMFIGFIQAYVFIILSSSYIGHKVHGDEEE.

The next 5 helical transmembrane spans lie at L18–A38, Y75–M95, N112–I132, V179–F199, and I203–L223.

The protein belongs to the ATPase A chain family. In terms of assembly, F-type ATPases have 2 components, CF(1) - the catalytic core - and CF(0) - the membrane proton channel. CF(1) has five subunits: alpha(3), beta(3), gamma(1), delta(1), epsilon(1). CF(0) has three main subunits: a(1), b(2) and c(9-12). The alpha and beta chains form an alternating ring which encloses part of the gamma chain. CF(1) is attached to CF(0) by a central stalk formed by the gamma and epsilon chains, while a peripheral stalk is formed by the delta and b chains.

Its subcellular location is the cell membrane. In terms of biological role, key component of the proton channel; it plays a direct role in the translocation of protons across the membrane. In Streptococcus agalactiae serotype Ia (strain ATCC 27591 / A909 / CDC SS700), this protein is ATP synthase subunit a.